A 946-amino-acid polypeptide reads, in one-letter code: MNKKLKLFSMPGAQTSQIVIMLFQSLLHLLEAIASREPTRYIITYSIGNTHTPEIFSYSDLLQSARKAAGALRFKYHVVPGSVVLLHFNDHWNSMLWFWATLIADCIPAMSTPFSNNPETRLRHLKHLSTTLRSPKCLTTASLAAEFAGQEYITPICVQSLDYENLVHLPIKEGGDIAVLMFTSGSSGHCKVVPLTHEQILASLSGKAWTFPLPDNTAQLNWVGMNHVASLVEVHLFSIYTHSDQVHIPTVEVLSHVTLFLDLIHRHRVSRTFAPNFFLAKLRAALSADDTLAKYTGSLSNLRYIVSGGEANVTQTINDLAQMLKKCGAVSNVIVPAFGMTETCAGAIYNTSFPQYDVEHGLPFASVGSCMPGIQVRIVQLNGNGNSVPPGTVGNLEICGPVVLKGYFNDPAATKSTFTNDNWFKTGDLAFVDDNGMLVLAGREKDSIIVNGANYSPHDIESAIDEANIPGLISGFTCCFSTFPPSADTEEVIIVYLPNYTPADTVRRSETAAAIRKVAMMSVGVRATVLPLDRTMLEKSTLGKLARGKIKAAYERGDYKSYQEANEQMMALHHKVSHHQPRSGLEQSLLGVFTRTIPENLTEDFDVLTSIFDLGITSIELLKLKRGIEDLIGHGQIPLITLMTNPTIRTLSDALKQHAQQRDCSIYNPVVVLQSQGKKPPIWLVHPVGGEVMIFMNLAKFIIDRPVYGLRARGFNDGEDPFHTFEEIVSTYHASIKEKQPSGPYAIAGYSYGAKVAFDIAKALEHNGDEVRFLGLLDLPPSLNGTQMRAVAWKEMLLHICRMVGVIREEGIKKIYPRLEPENISPRHAIETVMGEADVTRLAELGLTASALERWANLTHALQRCIVDHKTNGSVAGADAFYCDPMASMAISNEQWACDYIGKWSDHTRSPPRFHHIAGTHYTILDAENIFSFQKTFLRALNDRGI.

The adenylation (A) domain stretch occupies residues 32 to 450; that stretch reads AIASREPTRY…AGREKDSIIV (419 aa). The region spanning 580 to 659 is the Carrier domain; sequence QPRSGLEQSL…TLSDALKQHA (80 aa). Serine 618 bears the O-(pantetheine 4'-phosphoryl)serine mark. The thioesterase (TE) domain stretch occupies residues 681-933; it reads PIWLVHPVGG…ILDAENIFSF (253 aa).

The protein belongs to the NRP synthetase family.

It catalyses the reaction 2 3-phenylpyruvate + H(+) = phenguignardate + H2O. In terms of biological role, nonribosomal peptide synthetase that mediates the biosynthesis of phenguignardic acid. PngA alone is sufficient for phenguignardic acid synthesis. PngA first activates phenylpyruvic acid (PPA) through its A domain to AMP-PPA. The PPA unit is then loaded to the T domain and eventually transferred to the TE domain. Another PPA unit is then loaded onto the T domain. The TE domain likely promotes the enolate formation on the attached unit, followed by a nucleophilic attack on the carbonyl to yield an ether linkage between the two units. Finally, the TE domain probably catalyzes a similar reaction to give the cyclized dioxolanone core and releases phenguignardic acid. The polypeptide is Nonribosomal peptide synthetase pngA (Aspergillus terreus (strain NIH 2624 / FGSC A1156)).